The primary structure comprises 453 residues: Bifunctional protein GlmU (453 aa).

Residues 1-225 (MNIVILAAGT…EWETLGVNSK (225 aa)) form a pyrophosphorylase region. UDP-N-acetyl-alpha-D-glucosamine-binding positions include 6-9 (LAAG), K20, Q71, 76-77 (GT), 98-100 (YGD), G135, E150, N165, and N223. Mg(2+) is bound at residue D100. Residue N223 coordinates Mg(2+). The linker stretch occupies residues 226–246 (AQLAELERIHQRTIADALLVD). The segment at 247-453 (GVTLADPARV…GYVRPVKKKS (207 aa)) is N-acetyltransferase. Residues R329 and K347 each coordinate UDP-N-acetyl-alpha-D-glucosamine. The active-site Proton acceptor is H359. Residues Y362 and N373 each contribute to the UDP-N-acetyl-alpha-D-glucosamine site. Residues A376, 382–383 (NY), S401, and A419 each bind acetyl-CoA.

The protein in the N-terminal section; belongs to the N-acetylglucosamine-1-phosphate uridyltransferase family. In the C-terminal section; belongs to the transferase hexapeptide repeat family. As to quaternary structure, homotrimer. The cofactor is Mg(2+).

The protein resides in the cytoplasm. It catalyses the reaction alpha-D-glucosamine 1-phosphate + acetyl-CoA = N-acetyl-alpha-D-glucosamine 1-phosphate + CoA + H(+). The enzyme catalyses N-acetyl-alpha-D-glucosamine 1-phosphate + UTP + H(+) = UDP-N-acetyl-alpha-D-glucosamine + diphosphate. It participates in nucleotide-sugar biosynthesis; UDP-N-acetyl-alpha-D-glucosamine biosynthesis; N-acetyl-alpha-D-glucosamine 1-phosphate from alpha-D-glucosamine 6-phosphate (route II): step 2/2. It functions in the pathway nucleotide-sugar biosynthesis; UDP-N-acetyl-alpha-D-glucosamine biosynthesis; UDP-N-acetyl-alpha-D-glucosamine from N-acetyl-alpha-D-glucosamine 1-phosphate: step 1/1. Its pathway is bacterial outer membrane biogenesis; LPS lipid A biosynthesis. Catalyzes the last two sequential reactions in the de novo biosynthetic pathway for UDP-N-acetylglucosamine (UDP-GlcNAc). The C-terminal domain catalyzes the transfer of acetyl group from acetyl coenzyme A to glucosamine-1-phosphate (GlcN-1-P) to produce N-acetylglucosamine-1-phosphate (GlcNAc-1-P), which is converted into UDP-GlcNAc by the transfer of uridine 5-monophosphate (from uridine 5-triphosphate), a reaction catalyzed by the N-terminal domain. The protein is Bifunctional protein GlmU of Burkholderia ambifaria (strain MC40-6).